The following is a 339-amino-acid chain: 3-isopropylmalate dehydrogenase (339 aa).

Positions 88, 98, 122, and 212 each coordinate substrate. Positions 212, 236, and 240 each coordinate Mg(2+). 272–284 (GSAPDIAGQGIAD) is an NAD(+) binding site.

This sequence belongs to the isocitrate and isopropylmalate dehydrogenases family. LeuB type 2 subfamily. In terms of assembly, homodimer. Mg(2+) is required as a cofactor. Mn(2+) serves as cofactor.

It localises to the cytoplasm. The catalysed reaction is (2R,3S)-3-isopropylmalate + NAD(+) = 4-methyl-2-oxopentanoate + CO2 + NADH. It functions in the pathway amino-acid biosynthesis; L-leucine biosynthesis; L-leucine from 3-methyl-2-oxobutanoate: step 3/4. In terms of biological role, catalyzes the oxidation of 3-carboxy-2-hydroxy-4-methylpentanoate (3-isopropylmalate) to 3-carboxy-4-methyl-2-oxopentanoate. The product decarboxylates to 4-methyl-2 oxopentanoate. The chain is 3-isopropylmalate dehydrogenase from Corynebacterium diphtheriae (strain ATCC 700971 / NCTC 13129 / Biotype gravis).